Consider the following 152-residue polypeptide: uncharacterized protein (152 aa).

Transmembrane regions (helical) follow at residues 15-35, 43-63, and 117-137; these read IINV…IYDI, LVVA…LILT, and TFLL…KLLI.

It to M.jannaschii MJ0129 and MJ0587.

It localises to the cell membrane. This is an uncharacterized protein from Methanocaldococcus jannaschii (strain ATCC 43067 / DSM 2661 / JAL-1 / JCM 10045 / NBRC 100440) (Methanococcus jannaschii).